Consider the following 220-residue polypeptide: Glutathione peroxidase (220 aa).

The active site involves U64. U64 is a non-standard amino acid (selenocysteine).

Belongs to the glutathione peroxidase family. Post-translationally, during periods of oxidative stress, Sec-64 may react with a superoxide radical, irreversibly lose hydroselenide and be converted to dehydroalanine.

It carries out the reaction 2 glutathione + H2O2 = glutathione disulfide + 2 H2O. In terms of biological role, may protect the virus and component of infected cells from oxidative damage by peroxides whose formation may be stimulated by infection. In Homo sapiens (Human), this protein is Glutathione peroxidase (GPX1).